We begin with the raw amino-acid sequence, 257 residues long: Diacetyl reductase [(S)-acetoin forming] (257 aa).

6-30 (IITGAAGGLGKGIAERLANDGFNIV) serves as a coordination point for NAD(+). Ser139 is a substrate binding site. The Proton acceptor role is filled by Tyr152. Lys156 is an active-site residue.

It belongs to the short-chain dehydrogenases/reductases (SDR) family.

The enzyme catalyses (S)-acetoin + NAD(+) = diacetyl + NADH + H(+). Catalyzes the irreversible reduction of 2,3-butanediol to (S)-acetoin in the presence of NADH. The sequence is that of Diacetyl reductase [(S)-acetoin forming] (butA) from Staphylococcus epidermidis (strain ATCC 12228 / FDA PCI 1200).